The chain runs to 131 residues: Profilin-2 (131 aa).

It belongs to the profilin family. Occurs in many kinds of cells as a complex with monomeric actin in a 1:1 ratio.

It is found in the cytoplasm. It localises to the cytoskeleton. Its function is as follows. Binds to actin and affects the structure of the cytoskeleton. At high concentrations, profilin prevents the polymerization of actin, whereas it enhances it at low concentrations. By binding to PIP2, it inhibits the formation of IP3 and DG. The protein is Profilin-2 of Malus domestica (Apple).